Here is a 314-residue protein sequence, read N- to C-terminus: L-lactate dehydrogenase 2 (314 aa).

Residues V16, D37, K42, Y68, and G82 to L83 contribute to the NAD(+) site. Substrate is bound by residues Q85, R91, and N123–D126. NAD(+)-binding positions include A121–N123 and S146. Position 151–154 (D151–R154) interacts with substrate. Residues R156 and H171 each coordinate beta-D-fructose 1,6-bisphosphate. Catalysis depends on H178, which acts as the Proton acceptor. The residue at position 223 (Y223) is a Phosphotyrosine. T232 serves as a coordination point for substrate.

Belongs to the LDH/MDH superfamily. LDH family. In terms of assembly, homotetramer.

It localises to the cytoplasm. The catalysed reaction is (S)-lactate + NAD(+) = pyruvate + NADH + H(+). It functions in the pathway fermentation; pyruvate fermentation to lactate; (S)-lactate from pyruvate: step 1/1. Its activity is regulated as follows. Allosterically activated by fructose 1,6-bisphosphate (FBP). Functionally, catalyzes the conversion of lactate to pyruvate. In Bacillus cereus (strain ATCC 10987 / NRS 248), this protein is L-lactate dehydrogenase 2.